Consider the following 266-residue polypeptide: Undecaprenyl-diphosphatase (266 aa).

8 helical membrane passes run 1–21 (MDFL…FIPV), 39–59 (PGSS…FWYF), 86–106 (SIFI…LFVT), 117–137 (FSIA…DIST), 153–173 (FIGI…GATI), 190–210 (SFLL…ITSI), 216–236 (FPFL…LLAI), and 246–266 (NGLK…ILNL).

It belongs to the UppP family.

The protein localises to the cell inner membrane. The enzyme catalyses di-trans,octa-cis-undecaprenyl diphosphate + H2O = di-trans,octa-cis-undecaprenyl phosphate + phosphate + H(+). Catalyzes the dephosphorylation of undecaprenyl diphosphate (UPP). Confers resistance to bacitracin. In Prochlorococcus marinus (strain MIT 9515), this protein is Undecaprenyl-diphosphatase.